Here is a 335-residue protein sequence, read N- to C-terminus: Holliday junction branch migration complex subunit RuvB (335 aa).

The tract at residues 1–183 is large ATPase domain (RuvB-L); sequence MDERIISSET…FGVIDHLEFY (183 aa). Residues Leu22, Arg23, Gly64, Lys67, Thr68, Thr69, 130–132, Arg173, Tyr183, and Arg220 contribute to the ATP site; that span reads EDY. Position 68 (Thr68) interacts with Mg(2+). Residues 184–254 are small ATPAse domain (RuvB-S); sequence TEEQLTEIVL…LAKEALTLLQ (71 aa). The head domain (RuvB-H) stretch occupies residues 257–335; the sequence is PRGLDTIDQK…HLGISYEKEV (79 aa). Positions 293, 312, and 317 each coordinate DNA.

Belongs to the RuvB family. As to quaternary structure, homohexamer. Forms an RuvA(8)-RuvB(12)-Holliday junction (HJ) complex. HJ DNA is sandwiched between 2 RuvA tetramers; dsDNA enters through RuvA and exits via RuvB. An RuvB hexamer assembles on each DNA strand where it exits the tetramer. Each RuvB hexamer is contacted by two RuvA subunits (via domain III) on 2 adjacent RuvB subunits; this complex drives branch migration. In the full resolvosome a probable DNA-RuvA(4)-RuvB(12)-RuvC(2) complex forms which resolves the HJ.

The protein localises to the cytoplasm. It catalyses the reaction ATP + H2O = ADP + phosphate + H(+). The RuvA-RuvB-RuvC complex processes Holliday junction (HJ) DNA during genetic recombination and DNA repair, while the RuvA-RuvB complex plays an important role in the rescue of blocked DNA replication forks via replication fork reversal (RFR). RuvA specifically binds to HJ cruciform DNA, conferring on it an open structure. The RuvB hexamer acts as an ATP-dependent pump, pulling dsDNA into and through the RuvAB complex. RuvB forms 2 homohexamers on either side of HJ DNA bound by 1 or 2 RuvA tetramers; 4 subunits per hexamer contact DNA at a time. Coordinated motions by a converter formed by DNA-disengaged RuvB subunits stimulates ATP hydrolysis and nucleotide exchange. Immobilization of the converter enables RuvB to convert the ATP-contained energy into a lever motion, pulling 2 nucleotides of DNA out of the RuvA tetramer per ATP hydrolyzed, thus driving DNA branch migration. The RuvB motors rotate together with the DNA substrate, which together with the progressing nucleotide cycle form the mechanistic basis for DNA recombination by continuous HJ branch migration. Branch migration allows RuvC to scan DNA until it finds its consensus sequence, where it cleaves and resolves cruciform DNA. This Listeria innocua serovar 6a (strain ATCC BAA-680 / CLIP 11262) protein is Holliday junction branch migration complex subunit RuvB.